Here is a 183-residue protein sequence, read N- to C-terminus: uncharacterized protein (183 aa).

This is an uncharacterized protein from Saccharolobus islandicus (Sulfolobus islandicus).